Consider the following 259-residue polypeptide: MTDTSLQSNTALENETTHFGFTTVAKEEKVTKVAEVFHSVAAKYDIMNDLMSGGIHRLWKRFTIDCSGARPGQRILDLGGGTGDLTAKFSRIVGDQGHVVLADINNSMLNVGRDKLRDNGIVGNVHYVQANAEELPFPDDYFDVITISFCLRNVTDKDKALRSMFRVLKPGGRLLVLEFSKPVLEPLSKVYDAYSFHLLPKMGELVANDAESYRYLAESIRMHPDQETLEGMMQDAGFENTKYYNLTGGIVALHRGYKF.

S-adenosyl-L-methionine is bound by residues T82, D103, 131-132, and S148; that span reads NA.

Belongs to the class I-like SAM-binding methyltransferase superfamily. MenG/UbiE family.

It catalyses the reaction a 2-demethylmenaquinol + S-adenosyl-L-methionine = a menaquinol + S-adenosyl-L-homocysteine + H(+). It carries out the reaction a 2-methoxy-6-(all-trans-polyprenyl)benzene-1,4-diol + S-adenosyl-L-methionine = a 5-methoxy-2-methyl-3-(all-trans-polyprenyl)benzene-1,4-diol + S-adenosyl-L-homocysteine + H(+). It functions in the pathway quinol/quinone metabolism; menaquinone biosynthesis; menaquinol from 1,4-dihydroxy-2-naphthoate: step 2/2. It participates in cofactor biosynthesis; ubiquinone biosynthesis. Its function is as follows. Methyltransferase required for the conversion of demethylmenaquinol (DMKH2) to menaquinol (MKH2) and the conversion of 2-polyprenyl-6-methoxy-1,4-benzoquinol (DDMQH2) to 2-polyprenyl-3-methyl-6-methoxy-1,4-benzoquinol (DMQH2). The polypeptide is Ubiquinone/menaquinone biosynthesis C-methyltransferase UbiE (Vibrio parahaemolyticus serotype O3:K6 (strain RIMD 2210633)).